We begin with the raw amino-acid sequence, 125 residues long: Ribonuclease P protein component (125 aa).

This sequence belongs to the RnpA family. As to quaternary structure, consists of a catalytic RNA component (M1 or rnpB) and a protein subunit.

The enzyme catalyses Endonucleolytic cleavage of RNA, removing 5'-extranucleotides from tRNA precursor.. In terms of biological role, RNaseP catalyzes the removal of the 5'-leader sequence from pre-tRNA to produce the mature 5'-terminus. It can also cleave other RNA substrates such as 4.5S RNA. The protein component plays an auxiliary but essential role in vivo by binding to the 5'-leader sequence and broadening the substrate specificity of the ribozyme. This chain is Ribonuclease P protein component, found in Oleidesulfovibrio alaskensis (strain ATCC BAA-1058 / DSM 17464 / G20) (Desulfovibrio alaskensis).